We begin with the raw amino-acid sequence, 490 residues long: Stomatal closure-related actin-binding protein 3 (490 aa).

This sequence belongs to the SCAB family. Expressed in roots, stems, leaves, siliques and flowers.

It is found in the cytoplasm. Its subcellular location is the cytoskeleton. Its function is as follows. Probable plant-specific actin binding protein that bundles and stabilizes microfilaments (MFs). The protein is Stomatal closure-related actin-binding protein 3 of Arabidopsis thaliana (Mouse-ear cress).